Reading from the N-terminus, the 206-residue chain is Ribonuclease HII (206 aa).

The RNase H type-2 domain maps to 1 to 206 (MKVLGIDEAG…SWATVQKKKQ (206 aa)). A divalent metal cation-binding residues include aspartate 7, glutamate 8, and aspartate 105.

Belongs to the RNase HII family. Requires Mn(2+) as cofactor. Mg(2+) is required as a cofactor.

It localises to the cytoplasm. It carries out the reaction Endonucleolytic cleavage to 5'-phosphomonoester.. Functionally, endonuclease that specifically degrades the RNA of RNA-DNA hybrids. The sequence is that of Ribonuclease HII (rnhB) from Methanothermobacter thermautotrophicus (strain ATCC 29096 / DSM 1053 / JCM 10044 / NBRC 100330 / Delta H) (Methanobacterium thermoautotrophicum).